The chain runs to 443 residues: KICSTOR complex protein ITFG2 (443 aa).

The stretch at 19 to 48 (FPHAICLGDVDNDALNELVVGDTSGKLSVY) is one FG-GAP 1; atypical repeat. Ser-104 carries the post-translational modification Phosphoserine. The stretch at 125–154 (NTKVMLISDIDGDGCYELVVGYTDRVVRAF) is one FG-GAP 2; atypical repeat. Phosphoserine is present on Ser-219.

In terms of assembly, part of the KICSTOR complex composed of KPTN, ITFG2, KICS2 and SZT2. SZT2 probably serves as a link between the other three proteins in the KICSTOR complex and may mediate the direct interaction with the GATOR complex via GATOR1. The KICSTOR complex interacts directly with the GATOR1 complex and most probably indirectly with the GATOR2 complex in an amino acid-independent manner.

It is found in the lysosome membrane. Its function is as follows. As part of the KICSTOR complex functions in the amino acid-sensing branch of the TORC1 signaling pathway. Recruits, in an amino acid-independent manner, the GATOR1 complex to the lysosomal membranes and allows its interaction with GATOR2 and the RAG GTPases. Functions upstream of the RAG GTPases and is required to negatively regulate mTORC1 signaling in absence of amino acids. In absence of the KICSTOR complex mTORC1 is constitutively localized to the lysosome and activated. The KICSTOR complex is also probably involved in the regulation of mTORC1 by glucose. The chain is KICSTOR complex protein ITFG2 from Mus musculus (Mouse).